The chain runs to 275 residues: Chlorobenzene dihydrodiol dehydrogenase (275 aa).

The active-site Proton acceptor is the Y155.

It belongs to the short-chain dehydrogenases/reductases (SDR) family.

The enzyme catalyses (1R,2R)-3-chlorocyclohexa-3,5-diene-1,2-diol + NAD(+) = 3-chlorocatechol + NADH + H(+). It functions in the pathway aromatic compound metabolism. Can transform various dihydrodiols of chlorobenzenes and chlorotoluenes into the respective catechols. The protein is Chlorobenzene dihydrodiol dehydrogenase of Cupriavidus sp. (strain PS12).